Reading from the N-terminus, the 804-residue chain is MFVSYKWLQEYVNLDGMTPEILAEKITRSGIEVEGIEYKGEGIKGVVIGHVLEREQHPNADKLNKCLVDIGEEEPVQIICGAPNVDKGQKVAVATVGAVLPGNFKIKKAKLRGEASNGMICSLQELGIQGKLVPKEYAEGIFVFPGDAETGADALQSLALDDAVLELGLTPNRADAMNMLGVAYEVAAILGREVKLPETAYQAGAEKAADYISVKIEDPEANPLYAAKIIKDVKIGPSPLWMQTKLINAGIRPHNNVVDVTNFVLLEYGQPLHAFDYDRFGSKEVVIRKAYENETITTLDEQERTLTTEHLVITNGSSPQAVAGVMGGAESEVREDTATVLLEAAYFNGQTVRKASKDLGLRSESSVRFEKGIDPARVRLAAERAADLISRYAGGTVLEGTVEENHLDIKENVIRLSVDKVTKVLGMSISKEEMVNIFERLGFAVEDAERELVVTVPSRRGDIAIEEDLIEEVARLYGYDNIPSTLPEVTGFAGGLTPYQDKRRKVRRFLEGAGLSQAITYSLTNDKKATAYALEKSFKTILSLPMSEERSVLRHSLLPNLLDSVAYNLARQADSAAFYEIGSVFLKAEEHTKPVEKEHVAGAVTGLWHKNLWQGEKKPVDFFVVKGIVEGLLEKLGITEGIEFAQSERKELHPGRTANILHNGSLVGFIGQLHPSVEKELDLSDTYVFELDLHELLRLDVPEITYTPIPKYPSVTRDIALVVDKQTTAGQLEDVIKTAGGKWLKEVHVFDVYEGEHMEEGKKSVAFSLQYLNPEQTLTEEEVTKVHDQVLKALEDKYQAVLRG.

One can recognise a tRNA-binding domain in the interval 40–155 (GEGIKGVVIG…GDAETGADAL (116 aa)). The B5 domain occupies 409-484 (IKENVIRLSV…RLYGYDNIPS (76 aa)). Residues aspartate 462, aspartate 468, glutamate 471, and glutamate 472 each coordinate Mg(2+). One can recognise an FDX-ACB domain in the interval 710 to 803 (PKYPSVTRDI…LEDKYQAVLR (94 aa)).

This sequence belongs to the phenylalanyl-tRNA synthetase beta subunit family. Type 1 subfamily. Tetramer of two alpha and two beta subunits. It depends on Mg(2+) as a cofactor.

It localises to the cytoplasm. It carries out the reaction tRNA(Phe) + L-phenylalanine + ATP = L-phenylalanyl-tRNA(Phe) + AMP + diphosphate + H(+). This chain is Phenylalanine--tRNA ligase beta subunit, found in Bacillus licheniformis (strain ATCC 14580 / DSM 13 / JCM 2505 / CCUG 7422 / NBRC 12200 / NCIMB 9375 / NCTC 10341 / NRRL NRS-1264 / Gibson 46).